A 1909-amino-acid polypeptide reads, in one-letter code: Plexin-B3 (1909 aa).

The N-terminal stretch at 1–44 (MCHAAQETPLLHHFMAPVMARWPPFGLCLLLLLLSPPPLPLTGA) is a signal peptide. The 427-residue stretch at 45–471 (HRFSAPNTTL…TAHQVDRIPV (427 aa)) folds into the Sema domain. Residues 45–1255 (HRFSAPNTTL…PLSAFPVEAQ (1211 aa)) are Extracellular-facing. Asn-51 is a glycosylation site (N-linked (GlcNAc...) asparagine). 2 cysteine pairs are disulfide-bonded: Cys-98/Cys-107 and Cys-132/Cys-140. The N-linked (GlcNAc...) asparagine glycan is linked to Asn-231. Cystine bridges form between Cys-267–Cys-370, Cys-283–Cys-315, Cys-333–Cys-357, Cys-474–Cys-491, Cys-480–Cys-525, Cys-483–Cys-500, Cys-494–Cys-506, and Cys-562–Cys-580. The PSI 1 domain occupies 473-526 (ACPQFPDCASCLQAQDPLCGWCVLQGRCTRKGQCGRAGQLNQWLWSYEEDSHCL). An N-linked (GlcNAc...) asparagine glycan is attached at Asn-615. PSI domains lie at 620–682 (DCSA…GACP) and 787–833 (DCAM…LLCP). N-linked (GlcNAc...) asparagine glycans are attached at residues Asn-802, Asn-900, Asn-957, Asn-1101, and Asn-1218. IPT/TIG domains are found at residues 835-925 (PSID…FTYQ), 927-1012 (PVLL…FRYT), 1015-1145 (PQLV…FLYQ), and 1159-1244 (ARPY…YEAE). Residues 1256 to 1276 (AGVGMGAAVLIAAVLLLTLMY) traverse the membrane as a helical segment. The Cytoplasmic portion of the chain corresponds to 1277–1909 (RHKSKQALRD…ALVENKVTDL (633 aa)).

This sequence belongs to the plexin family. As to quaternary structure, interacts (via cytoplasmic domain) with RAC1 and ARHGDIA. Binds MET and MST1R. Interacts (via cytoplasmic domain) with FSCN1. Interacts with RIT2/RIN. May form homodimers (via Sema domain). Expression detected in Purkinje and granular cells in cerebellum, and in brain neocortex but not in corpus callosum. Expressed in glioma cells and embryonic kidney cells (at protein level). Expressed in brain, liver, pancreas and placenta, with weak expression detected also in lung and kidney. Expressed in several glioma cell lines.

Its subcellular location is the cell membrane. Receptor for SEMA5A that plays a role in axon guidance, invasive growth and cell migration. Stimulates neurite outgrowth and mediates Ca(2+)/Mg(2+)-dependent cell aggregation. In glioma cells, SEMA5A stimulation of PLXNB3 results in the disassembly of F-actin stress fibers, disruption of focal adhesions and cellular collapse as well as inhibition of cell migration and invasion through ARHGDIA-mediated inactivation of RAC1. This Homo sapiens (Human) protein is Plexin-B3 (PLXNB3).